The following is a 350-amino-acid chain: Dihydroorotase (350 aa).

Positions 13 and 15 each coordinate Zn(2+). Substrate is bound by residues 15-17 (HLR) and asparagine 41. Lysine 99, histidine 136, and histidine 174 together coordinate Zn(2+). Lysine 99 is modified (N6-carboxylysine). Histidine 136 provides a ligand contact to substrate. Substrate is bound at residue leucine 219. Aspartate 247 is a binding site for Zn(2+). The active site involves aspartate 247. Residues histidine 251 and alanine 263 each coordinate substrate.

Belongs to the metallo-dependent hydrolases superfamily. DHOase family. Class II DHOase subfamily. As to quaternary structure, homodimer. Zn(2+) is required as a cofactor.

The enzyme catalyses (S)-dihydroorotate + H2O = N-carbamoyl-L-aspartate + H(+). It functions in the pathway pyrimidine metabolism; UMP biosynthesis via de novo pathway; (S)-dihydroorotate from bicarbonate: step 3/3. Its function is as follows. Catalyzes the reversible cyclization of carbamoyl aspartate to dihydroorotate. The chain is Dihydroorotase from Allorhizobium ampelinum (strain ATCC BAA-846 / DSM 112012 / S4) (Agrobacterium vitis (strain S4)).